A 374-amino-acid polypeptide reads, in one-letter code: MNVRERCRRLWEDPGPRKDRSPFALLLEVFSLFYRVGVVLRNDFYDRELFRSVRLPCRVISVGNVTAGGTGKTPMVILLARLLKDLGYRPAVLSRGYGGKGKAPVNIVSDGASILMSPLEGGDEPVLIARSVPGIPVLTGSDRCLTGRNAIERMGADVLILDDGFQHRRLFRDINIVLLDSDRPWGNGFLLPRGPLREPPTRALRRADIVIRTGGMHNRTSGEAAGTQVETGDSGAVLLRSSPIFRGIHQPCALISLDGGRKMDLQYLAGERICAFAGIGVPEQFRKTLESLGAEIVEFLAYPDHHRYDSSDLAFIERTAKEARAEMIVTTEKDEIKLAPMEKLALPACFLSIEMRVKPQKSFEHLVLEMMKDG.

Residue 66 to 73 participates in ATP binding; that stretch reads TAGGTGKT.

This sequence belongs to the LpxK family.

It catalyses the reaction a lipid A disaccharide + ATP = a lipid IVA + ADP + H(+). The protein operates within glycolipid biosynthesis; lipid IV(A) biosynthesis; lipid IV(A) from (3R)-3-hydroxytetradecanoyl-[acyl-carrier-protein] and UDP-N-acetyl-alpha-D-glucosamine: step 6/6. In terms of biological role, transfers the gamma-phosphate of ATP to the 4'-position of a tetraacyldisaccharide 1-phosphate intermediate (termed DS-1-P) to form tetraacyldisaccharide 1,4'-bis-phosphate (lipid IVA). The chain is Tetraacyldisaccharide 4'-kinase from Syntrophus aciditrophicus (strain SB).